The sequence spans 231 residues: tRNA (guanine-N(1)-)-methyltransferase (231 aa).

S-adenosyl-L-methionine contacts are provided by residues glycine 114 and 134 to 139; that span reads IGDYVL.

Belongs to the RNA methyltransferase TrmD family. In terms of assembly, homodimer.

Its subcellular location is the cytoplasm. The enzyme catalyses guanosine(37) in tRNA + S-adenosyl-L-methionine = N(1)-methylguanosine(37) in tRNA + S-adenosyl-L-homocysteine + H(+). Its function is as follows. Specifically methylates guanosine-37 in various tRNAs. This is tRNA (guanine-N(1)-)-methyltransferase from Clostridioides difficile (strain 630) (Peptoclostridium difficile).